Reading from the N-terminus, the 375-residue chain is Heat shock protein 42 (375 aa).

Disordered regions lie at residues 21–59, 81–127, 154–238, and 347–375; these read TGQRGQQGYPRQPQRPQRYHPHYGQVHVGGHHPRHHPLY, SPEY…YYHC, PYEG…ETRM, and PKPKKRIAIEEIPDEELEFEENPNPTVEN. Low complexity predominate over residues 22–48; sequence GQRGQQGYPRQPQRPQRYHPHYGQVHV. The segment covering 49 to 58 has biased composition (basic residues); it reads GGHHPRHHPL. Acidic residues-rich tracts occupy residues 85–101 and 158–168; these read GYDDEDGEEEDQDEDMV and TEPEIEANTEQ. Residues 169 to 197 show a composition bias toward basic and acidic residues; that stretch reads EGEKGEEKDKKDKSEAPKEEAGETNKEKP. A phosphoserine mark is found at S182, S213, S214, S215, and S223. A sHSP domain is found at 237 to 356; the sequence is RMDLPFSPEV…PKPKKRIAIE (120 aa). The span at 357 to 367 shows a compositional bias: acidic residues; it reads EIPDEELEFEE.

Belongs to the small heat shock protein (HSP20) family. As to quaternary structure, forms oligomeric complexes. Interacts with itself.

This is Heat shock protein 42 (HSP42) from Saccharomyces cerevisiae (strain ATCC 204508 / S288c) (Baker's yeast).